An 889-amino-acid polypeptide reads, in one-letter code: Translation initiation factor IF-2 (889 aa).

Positions 1-299 (MTDNKDDKTL…EKFKRSQMQE (299 aa)) are disordered. The segment covering 61-76 (ITPVAATPAARPAEQR) has biased composition (low complexity). Over residues 77–93 (PMPPQPSGRPAPQPQPH) the composition is skewed to pro residues. The span at 116-182 (MEARRRALAE…EAEKTEEKVE (67 aa)) shows a compositional bias: basic and acidic residues. Low complexity predominate over residues 196–215 (RPQPGRAAPAATPAAPDGAA). A compositionally biased stretch (basic and acidic residues) spans 220-231 (RGTESEEDERRR). In terms of domain architecture, tr-type G spans 387-554 (SRPPIVTIMG…AILLQSEILD (168 aa)). Residues 396–403 (GHVDHGKT) form a G1 region. Residue 396 to 403 (GHVDHGKT) coordinates GTP. The segment at 421–425 (GITQH) is G2. The G3 stretch occupies residues 442–445 (DTPG). GTP contacts are provided by residues 442-446 (DTPGH) and 496-499 (NKID). A G4 region spans residues 496–499 (NKID). The segment at 532 to 534 (SAK) is G5.

The protein belongs to the TRAFAC class translation factor GTPase superfamily. Classic translation factor GTPase family. IF-2 subfamily.

The protein resides in the cytoplasm. In terms of biological role, one of the essential components for the initiation of protein synthesis. Protects formylmethionyl-tRNA from spontaneous hydrolysis and promotes its binding to the 30S ribosomal subunits. Also involved in the hydrolysis of GTP during the formation of the 70S ribosomal complex. This Rhizobium meliloti (strain 1021) (Ensifer meliloti) protein is Translation initiation factor IF-2.